Consider the following 260-residue polypeptide: Salicylic acid-binding protein 2 (260 aa).

Ala13, Ser81, and Lys159 together coordinate salicylate. Ser81 acts as the Acyl-ester intermediate in catalysis. Residues Asp210 and His238 each act as charge relay system in the active site. 3 residues coordinate salicylate: His238, Leu253, and His257.

This sequence belongs to the AB hydrolase superfamily. Methylesterase family.

It carries out the reaction methyl salicylate + H2O = salicylate + methanol + H(+). Its pathway is plant hormone biosynthesis. Esterase activity is down-regulated by salicylic acid (SA) or by tetraFA, a synthetic SA analog. Its function is as follows. Required to convert methyl salicylate (MeSA) to salicylic acid (SA) as part of the signal transduction pathways that activate systemic acquired resistance in systemic tissue. MeSA is believed to be an inactive form that needs to be demethylated to exert a biological effect. Also able to catalyze the conversion of acibenzolar-S-methyl into acibenzolar to induce systemic acquired resistance. This chain is Salicylic acid-binding protein 2, found in Nicotiana tabacum (Common tobacco).